The chain runs to 341 residues: S-adenosylmethionine:tRNA ribosyltransferase-isomerase (341 aa).

This sequence belongs to the QueA family. In terms of assembly, monomer.

It localises to the cytoplasm. The enzyme catalyses 7-aminomethyl-7-carbaguanosine(34) in tRNA + S-adenosyl-L-methionine = epoxyqueuosine(34) in tRNA + adenine + L-methionine + 2 H(+). It participates in tRNA modification; tRNA-queuosine biosynthesis. Transfers and isomerizes the ribose moiety from AdoMet to the 7-aminomethyl group of 7-deazaguanine (preQ1-tRNA) to give epoxyqueuosine (oQ-tRNA). The protein is S-adenosylmethionine:tRNA ribosyltransferase-isomerase of Pelodictyon phaeoclathratiforme (strain DSM 5477 / BU-1).